We begin with the raw amino-acid sequence, 545 residues long: Chaperonin GroEL 2 (545 aa).

ATP-binding positions include 29–32, 86–90, G413, 479–481, and D495; these read TLGP, DGTTT, and NAA.

It belongs to the chaperonin (HSP60) family. In terms of assembly, forms a cylinder of 14 subunits composed of two heptameric rings stacked back-to-back. Interacts with the co-chaperonin GroES.

The protein resides in the cytoplasm. It carries out the reaction ATP + H2O + a folded polypeptide = ADP + phosphate + an unfolded polypeptide.. In terms of biological role, together with its co-chaperonin GroES, plays an essential role in assisting protein folding. The GroEL-GroES system forms a nano-cage that allows encapsulation of the non-native substrate proteins and provides a physical environment optimized to promote and accelerate protein folding. The chain is Chaperonin GroEL 2 from Prochlorococcus marinus (strain MIT 9312).